Consider the following 932-residue polypeptide: Protocadherin gamma-A3 (932 aa).

Residues 1–29 form the signal peptide; it reads MTNCLSFRNGRGLALLCALLGTLCETGSG. Cadherin domains follow at residues 30 to 133, 134 to 242, 243 to 347, 348 to 452, 453 to 562, and 570 to 682; these read QIRY…APNF, PTEE…PPMF, TQPE…APEI, TITS…PPTF, PHLS…APEI, and DGST…EPSA. At 30 to 692 the chain is on the extracellular side; the sequence is QIRYSVSEEL…KPNDSDLTLY (663 aa). N-linked (GlcNAc...) asparagine glycosylation is found at N265, N419, and N545. N-linked (GlcNAc...) asparagine glycosylation occurs at N685. A helical membrane pass occupies residues 693–713; the sequence is LVVAVAAVSCVFLALVIVLLA. The Cytoplasmic segment spans residues 714-932; the sequence is HRLRRWHKSR…KKKSGKKEKK (219 aa). 2 disordered regions span residues 806–841 and 902–932; these read LLQQ…WPNN and ATLT…KEKK. Residues 922–932 are compositionally biased toward basic residues; the sequence is NKKKSGKKEKK.

The protein localises to the cell membrane. Its function is as follows. Potential calcium-dependent cell-adhesion protein. May be involved in the establishment and maintenance of specific neuronal connections in the brain. The chain is Protocadherin gamma-A3 (PCDHGA3) from Pan troglodytes (Chimpanzee).